The chain runs to 505 residues: MHELIREAVDNPGTAWEIIKMDRDVTEVVDAVSDLSREDKIKLGATFKRFPLGCDLTELIVGTCASDLEKIDLMGNCMLSDTIGATIHVCAYAFADIAESYGMRPVELMREVRETTEVPLDLDHFGRYGPMRFPRSITGCGGQCYLEGPPFEGCPRERIHARLLDREKEGLSDREEWVELSSSVAVNLTPVQGAETHAAPLEEAEEVLELARKHGKGVEAIMFVGDGYDDLISGFEAGLEMGVDVFVLEGGPFNLAGDRLDAFAGAVAAARILTPGKIVATNGAYEDECRIGLRAGLNAIITGFPKNHHGYMCGYTPGTARRGKFGLPRVMKIMREEVESGLTPVPIQKAQLEALAAAVKVSGTENVYPRTLGYTYVGDAHWACLPSTPLYERVEVKRDVNALVKMAEDGDIHGRVAIFGARFVSWVIADKLDGLVDEFVIVDRDPWVEQVTVDNLRSELRTDVHPGNSDDEGAYSSADSSIVSTTIPQISAKISGKFRDTVTLV.

The interval 461–480 (RTDVHPGNSDDEGAYSSADS) is disordered.

This sequence to M.jannaschii MJ0787.

This is an uncharacterized protein from Methanothermobacter thermautotrophicus (strain ATCC 29096 / DSM 1053 / JCM 10044 / NBRC 100330 / Delta H) (Methanobacterium thermoautotrophicum).